The chain runs to 547 residues: MFS-type transporter ltbE (547 aa).

The interval 1–23 (MEIAAETTGPAGVTTDVTNAEES) is disordered. 13 consecutive transmembrane segments (helical) span residues 33 to 53 (QGWALASLTVAFMSICLVLAI), 74 to 94 (DIGWYGSSYLIAQMALLPTCG), 104 to 124 (WVYCLSLAIFELGSIIAAVAP), 135 to 155 (ISGLGAAGLVSGTTTILSYCV), 165 to 185 (PIVLGMYNIGSAMGPLIGGSI), 195 to 215 (FIFWINLPFGAVALVLVWFTL), 240 to 260 (ATLLLGATTCLNLALQWGGIV), 267 to 287 (KVFGCLIGFGLLLITFLCLQW), 310 to 330 (GFMMLVQVAIVVQSYFWPIYF), 343 to 363 (INLLPLIISNSLSTLCAGSLA), 370 to 390 (VPFMWVGPLILATGGGLYQLV), 399 to 419 (WIGFQILSGVGYGCCSQMPIL), and 432 to 452 (TGLVMIMFFQMLGGALAPSVG). Asn-463 is a glycosylation site (N-linked (GlcNAc...) asparagine). Residues 506–526 (VFWVGVATPALAWIASWAMEW) form a helical membrane-spanning segment.

This sequence belongs to the major facilitator superfamily. TCR/Tet family.

It localises to the cell membrane. MFS-type transporter; part of the gene cluster that mediates the biosynthesis of luteodienoside A, a glycosylated polyketide consisting of an unusual 1-O-beta-D-glucopyranosyl-myo-inositol (glucinol) ester of 3-hydroxy-2,2,4-trimethylocta-4,6-dienoic acid. LtbE is probably involved in the secretion of luteodienoside A. The chain is MFS-type transporter ltbE from Aspergillus luteorubrus.